We begin with the raw amino-acid sequence, 431 residues long: Acrosin (431 aa).

The first 16 residues, 1-16 (MLPTAVLLVLVVSVVA), serve as a signal peptide directing secretion. N19 is a glycosylation site (N-linked (GlcNAc...) asparagine). 6 disulfides stabilise this stretch: C22–C152, C26–C160, C71–C87, C175–C244, C207–C223, and C234–C264. The Peptidase S1 domain maps to 40–288 (VVGGQAAQQG…FLDWIASRIG (249 aa)). Active-site charge relay system residues include H86 and D140. N208 carries an N-linked (GlcNAc...) asparagine glycan. The active-site Charge relay system is the S238. Positions 295–385 (IQPATPTPPT…PPPASTKPPQ (91 aa)) are disordered. The span at 331–341 (PHPHPHPHPHP) shows a compositional bias: basic residues. The span at 342–381 (RPPQPPAAQAPPPPPPPPPPPPPPPPPPPPPPPPPPPAST) shows a compositional bias: pro residues. A propeptide spans 351–431 (APPPPPPPPP…TEIPEVTLAS (81 aa)) (pro-rich).

Belongs to the peptidase S1 family. In terms of assembly, heavy chain (catalytic) and a light chain linked by two disulfide bonds. Forms a heterodimer with SERPINA5.

The catalysed reaction is Preferential cleavage: Arg-|-Xaa, Lys-|-Xaa.. With respect to regulation, inhibited by SERPINA5. Functionally, acrosin is the major protease of mammalian spermatozoa. It is a serine protease of trypsin-like cleavage specificity, it is synthesized in a zymogen form, proacrosin and stored in the acrosome. The polypeptide is Acrosin (ACR) (Oryctolagus cuniculus (Rabbit)).